We begin with the raw amino-acid sequence, 58 residues long: Large ribosomal subunit protein bL32 (58 aa).

This sequence belongs to the bacterial ribosomal protein bL32 family.

The sequence is that of Large ribosomal subunit protein bL32 from Ligilactobacillus salivarius (strain UCC118) (Lactobacillus salivarius).